Consider the following 330-residue polypeptide: Methionyl-tRNA formyltransferase (330 aa).

112–115 is a binding site for (6S)-5,6,7,8-tetrahydrofolate; that stretch reads SLLP.

The protein belongs to the Fmt family.

The catalysed reaction is L-methionyl-tRNA(fMet) + (6R)-10-formyltetrahydrofolate = N-formyl-L-methionyl-tRNA(fMet) + (6S)-5,6,7,8-tetrahydrofolate + H(+). In terms of biological role, attaches a formyl group to the free amino group of methionyl-tRNA(fMet). The formyl group appears to play a dual role in the initiator identity of N-formylmethionyl-tRNA by promoting its recognition by IF2 and preventing the misappropriation of this tRNA by the elongation apparatus. The sequence is that of Methionyl-tRNA formyltransferase from Synechocystis sp. (strain ATCC 27184 / PCC 6803 / Kazusa).